Consider the following 502-residue polypeptide: MSNKHTQADVILIGAGIMSATLGSLLKELSPNLEIRVFEKLENPGEESSNEWNNAGTGHSALCELNYTSERTDGSIDINKAVKVNEQFQLSRQFWSYLVNRNLIRNPEDFIRALPHISLVQGEDNVTFLRKRFKALVNHPLFNGMEFSDDNEKLKEWMPLIMDKRDTNEPIAATKIDSGTDVNFGALTRLLFQEFDHKGIDVNYNHSVEDIKRNSEGLWEVKVHDMNDEKIEYHTAKFVFIGAGGGSLPLLQKTGIKESKHIGGFPVSGLFMVCNNPEVIEQHHAKVYGKAKVGAPPMSVPHLDTRFIDGKKSLLFGPFAGFSPKFLKTGSLFDLMHSVKSDNLFTMLSAGMKELPLTKYLIQQVVLSNEKRMEELREFIPNAQSKDWDIVIAGQRVQVIKDTEDGGKGTLQFGTEVVCGEDGTMAALLGASPGASTAVHVMLEVIQKCFPEHLQEWEPKIKEMIPSYGIALSENPELYKEIEVSIEKALGLKNEEPMVIPS.

Belongs to the MQO family. FAD serves as cofactor.

The catalysed reaction is (S)-malate + a quinone = a quinol + oxaloacetate. It functions in the pathway carbohydrate metabolism; tricarboxylic acid cycle; oxaloacetate from (S)-malate (quinone route): step 1/1. This chain is Probable malate:quinone oxidoreductase, found in Oceanobacillus iheyensis (strain DSM 14371 / CIP 107618 / JCM 11309 / KCTC 3954 / HTE831).